Consider the following 305-residue polypeptide: Tyrosine recombinase XerC (305 aa).

The Core-binding (CB) domain occupies 1–93 (MVLDGFAAHF…SWRQYCVWLV (93 aa)). Positions 114 to 294 (RVPKALPQEW…DFDHIARLYD (181 aa)) constitute a Tyr recombinase domain. Active-site residues include arginine 155, lysine 179, histidine 246, arginine 249, and histidine 272. Residue tyrosine 281 is the O-(3'-phospho-DNA)-tyrosine intermediate of the active site.

It belongs to the 'phage' integrase family. XerC subfamily. In terms of assembly, forms a cyclic heterotetrameric complex composed of two molecules of XerC and two molecules of XerD.

The protein localises to the cytoplasm. Site-specific tyrosine recombinase, which acts by catalyzing the cutting and rejoining of the recombining DNA molecules. The XerC-XerD complex is essential to convert dimers of the bacterial chromosome into monomers to permit their segregation at cell division. It also contributes to the segregational stability of plasmids. The chain is Tyrosine recombinase XerC from Neisseria meningitidis serogroup C (strain 053442).